Reading from the N-terminus, the 986-residue chain is Bone morphogenetic protein 1 (986 aa).

A signal peptide spans 1-22 (MPGVARLPLLLGLLLLPRPGRP). Positions 23-120 (LDLADYTYDL…RWRGRSRSRR (98 aa)) are excised as a propeptide. Residues 83-125 (SIKAAVPGNTSTPSCQSTNGQPQRGACGRWRGRSRSRRAATSR) are disordered. The segment covering 90–104 (GNTSTPSCQSTNGQP) has biased composition (polar residues). N-linked (GlcNAc...) asparagine glycosylation is present at asparagine 91. Residues 112 to 122 (WRGRSRSRRAA) are compositionally biased toward basic residues. The Peptidase M12A domain occupies 121–320 (AATSRPERVW…AQARKLYKCP (200 aa)). An N-linked (GlcNAc...) asparagine glycan is attached at asparagine 142. 4 disulfides stabilise this stretch: cysteine 163/cysteine 319, cysteine 183/cysteine 205, cysteine 185/cysteine 186, and cysteine 322/cysteine 348. Histidine 213 is a binding site for Zn(2+). The active site involves glutamate 214. Zn(2+) contacts are provided by histidine 217 and histidine 223. 2 CUB domains span residues 322 to 434 (CGET…YEAI) and 435 to 546 (CGGD…NFFK). Asparagine 332 and asparagine 363 each carry an N-linked (GlcNAc...) asparagine glycan. Disulfide bonds link cysteine 375/cysteine 397, cysteine 435/cysteine 461, cysteine 488/cysteine 510, cysteine 551/cysteine 563, cysteine 559/cysteine 572, cysteine 574/cysteine 587, cysteine 591/cysteine 617, cysteine 644/cysteine 666, cysteine 707/cysteine 718, cysteine 714/cysteine 727, cysteine 729/cysteine 742, cysteine 747/cysteine 773, cysteine 800/cysteine 822, cysteine 860/cysteine 890, and cysteine 917/cysteine 939. The region spanning 547–588 (EVDECSRPNRGGCEQRCLNTLGSYKCSCDPGYELAPDKRRCE) is the EGF-like 1; calcium-binding domain. Residues 591–703 (CGGFLTKLNG…KGFKAHFFSD (113 aa)) form the CUB 3 domain. Asparagine 599 is a glycosylation site (N-linked (GlcNAc...) asparagine). An EGF-like 2; calcium-binding domain is found at 704-743 (KDECSKDNGGCQQDCVNTFGSYECQCRSGFVLHDNKHDCK). 2 CUB domains span residues 747–859 (CDHK…HATE) and 860–976 (CGGQ…YTST). Arginine 934 and arginine 937 each carry omega-N-methylarginine.

Interacts with POSTN, the interaction promotes deposition on the extracellular matrix. The cofactor is Zn(2+). In terms of processing, proteolytically activated in the trans-Golgi network by furin-like/paired basic proprotein convertases, cleavage is not required for secretion. In terms of tissue distribution, ubiquitous.

It is found in the golgi apparatus. The protein localises to the trans-Golgi network. It localises to the secreted. The protein resides in the extracellular space. Its subcellular location is the extracellular matrix. The enzyme catalyses Cleavage of the C-terminal propeptide at Ala-|-Asp in type I and II procollagens and at Arg-|-Asp in type III.. With respect to regulation, activity is increased by the procollagen C-endopeptidase enhancer protein. Metalloprotease that plays key roles in regulating the formation of the extracellular matrix (ECM) via processing of various precursor proteins into mature functional enzymes or structural proteins. Thereby participates in several developmental and physiological processes such as cartilage and bone formation, muscle growth and homeostasis, wound healing and tissue repair. Roles in ECM formation include cleavage of the C-terminal propeptides from procollagens such as procollagen I, II and III or the proteolytic activation of the enzyme lysyl oxidase LOX, necessary to formation of covalent cross-links in collagen and elastic fibers. Additional substrates include matricellular thrombospondin-1/THBS1 whose cleavage leads to cell adhesion disruption and TGF-beta activation. In terms of biological role, plays an important role in bone repair by acting as a coactivator of BMP7. The sequence is that of Bone morphogenetic protein 1 (BMP1) from Homo sapiens (Human).